A 308-amino-acid chain; its full sequence is UPF0026 protein HP_0117 (308 aa).

The region spanning F18–A248 is the Radical SAM core domain. Positions 33, 37, and 40 each coordinate [4Fe-4S] cluster.

It belongs to the UPF0026 family. It depends on [4Fe-4S] cluster as a cofactor.

This chain is UPF0026 protein HP_0117, found in Helicobacter pylori (strain ATCC 700392 / 26695) (Campylobacter pylori).